The primary structure comprises 228 residues: MSYSNAYAPSAPELPESFVQQQHDGESRYTYAYPSYQPTQQFSSYSGMFSPETHPEIVRSFESADRNRSGFLEESELRQALSLSGYDGISNRTIRLLLFIYKIPVDSLLRLGPKEYVELWNCLAQWRAIFNRYDRDRSGKMNSTQLRDAFYNLGCVLPTSVHQLIVSQFDDGTGKTVDLCFDSFLECGMIVKGLTEKFRENDPGYTGYATLSYDVFMLMVIPFIATYD.

EF-hand domains lie at 52–87 (ETHP…SGYD) and 121–156 (NCLA…LGCV). Ca(2+) is bound by residues Asp65, Asn67, Ser69, and Glu76.

In terms of biological role, potential calcium sensor. The polypeptide is Probable calcium-binding protein CML48 (CML48) (Arabidopsis thaliana (Mouse-ear cress)).